The chain runs to 267 residues: tRNA pseudouridine synthase A (267 aa).

The active-site Nucleophile is aspartate 54. Tyrosine 112 is a substrate binding site.

It belongs to the tRNA pseudouridine synthase TruA family. Homodimer.

It catalyses the reaction uridine(38/39/40) in tRNA = pseudouridine(38/39/40) in tRNA. Its function is as follows. Formation of pseudouridine at positions 38, 39 and 40 in the anticodon stem and loop of transfer RNAs. The sequence is that of tRNA pseudouridine synthase A from Bordetella avium (strain 197N).